A 700-amino-acid chain; its full sequence is MHPFTKTLVTTALPYANGPVHLGHLAGVYLPADLYVRYMRLKGEDIIHIGGSDEHGVPITITAEREGISPKDVVDRYHRMNSEAFSKCGISFDYYGRTTSEVHHKTAQEFFTDIEEKGIFIRKSEKLFFDRKADRFLSDRYVTGTCPICNNTEANGDQCEQCGTHLSPLELINPKSKLSDATPELRETMHWYFPLGRFQDQLESYVHQHEDDWRQNVLNYTHTWLKQGLKDRAITRDLSWGIKVPLESEEAEGKVLYVWFDAVLGYISFTREWAEKLGQSERWKEYWQNPECRLLHFIGKDNVVFHTLMLPAILMAWNEGRQSECYNLADNVPASEFMNFEGRKFSKSRNYAVYLGEFLEKFPADTLRYSIAMNYPENKDTDFSWQDFQNRTNGELADTLGNFIKRSVDFTNARFDGEVPWDYSEDLLNNVLLCDQIDDIARAYDGFHFREAVSSSMDIARNANRFLTQNEPWKLIKTDPDAAARVMSISLNLCHALSILFYPVIPETCNRIHAMLGFDGTIDSLIKPGVSLWEQAKKPGLNKGHRLLGKSEILFTKIEDADIAPELKKIELLVAEAEKREAGAEQQKMEFKPLISFDDFLKVDLRVARVITAEKVKKAAKLLKLQLQVGSATKQVLAGIAKYYTPEEMVGKNVVIVANLADRTIRDDVSEGMILAVEGADGKLFVIEPEGEEINGRQIQ.

The short motif at 14-24 (PYANGPVHLGH) is the 'HIGH' region element. Cysteine 146, cysteine 149, cysteine 159, and cysteine 162 together coordinate Zn(2+). The 'KMSKS' region motif lies at 344–348 (KFSKS). Lysine 347 contributes to the ATP binding site. In terms of domain architecture, tRNA-binding spans 599–700 (DFLKVDLRVA…GEEINGRQIQ (102 aa)).

The protein belongs to the class-I aminoacyl-tRNA synthetase family. MetG type 1 subfamily. As to quaternary structure, homodimer. Zn(2+) is required as a cofactor.

It localises to the cytoplasm. It catalyses the reaction tRNA(Met) + L-methionine + ATP = L-methionyl-tRNA(Met) + AMP + diphosphate. Is required not only for elongation of protein synthesis but also for the initiation of all mRNA translation through initiator tRNA(fMet) aminoacylation. The polypeptide is Methionine--tRNA ligase (Pelodictyon phaeoclathratiforme (strain DSM 5477 / BU-1)).